The sequence spans 359 residues: Prostaglandin D2 receptor (359 aa).

Residues 1 to 21 are Extracellular-facing; that stretch reads MKSPFYRCQNTTSVEKGNSAV. A glycan (N-linked (GlcNAc...) asparagine) is linked at asparagine 10. Residues 22-42 form a helical membrane-spanning segment; sequence MGGVLFSTGLLGNLLALGLLA. The Cytoplasmic portion of the chain corresponds to 43–59; the sequence is RSGLGWCSRRPLRPLPS. Residues 60 to 80 traverse the membrane as a helical segment; it reads VFYMLVCGLTVTDLLGKCLLS. Residues 81-107 lie on the Extracellular side of the membrane; sequence PVVLAAYAQNRSLRVLAPALDNSLCQA. The N-linked (GlcNAc...) asparagine glycan is linked to asparagine 90. Residues cysteine 105 and cysteine 183 are joined by a disulfide bond. Residues 108–128 form a helical membrane-spanning segment; it reads FAFFMSFFGLSSTLQLLAMAL. Residues 129-150 lie on the Cytoplasmic side of the membrane; that stretch reads ECWLSLGHPFFYRRHITLRLGA. A helical membrane pass occupies residues 151 to 171; sequence LVAPVVSAFSLAFCALPFMGF. Residues 172 to 195 are Extracellular-facing; that stretch reads GKFVQYCPGTWCFIQMVHEEGSLS. A helical transmembrane segment spans residues 196–216; it reads VLGYSVLYSSLMALLVLATVL. Residues 217 to 262 are Cytoplasmic-facing; that stretch reads CNLGAMRNLYAMHRRLQRHPRSCTRDCAEPRADGREASPQPLEELD. Residues 263 to 283 traverse the membrane as a helical segment; the sequence is HLLLLALMTVLFTMCSLPVIY. Topologically, residues 284-310 are extracellular; it reads RAYYGAFKDVKEKNRTSEEAEDLRALR. An N-linked (GlcNAc...) asparagine glycan is attached at asparagine 297. A helical transmembrane segment spans residues 311–331; it reads FLSVISIVDPWIFIIFRSPVF. At 332 to 359 the chain is on the cytoplasmic side; it reads RIFFHKIFIRPLRYRSRCSNSTNMESSL.

Belongs to the G-protein coupled receptor 1 family. In terms of tissue distribution, expressed in retinal choroid, ciliary epithelium, longitudinal and circular ciliary muscles, iris, small intestine and platelet membranes.

It localises to the cell membrane. Functionally, receptor for prostaglandin D2 (PGD2). The activity of this receptor is mainly mediated by G(s) proteins that stimulate adenylate cyclase, resulting in an elevation of intracellular cAMP. A mobilization of calcium is also observed, but without formation of inositol 1,4,5-trisphosphate. Involved in PLA2G3-dependent maturation of mast cells. PLA2G3 is secreted by immature mast cells and acts on nearby fibroblasts upstream to PTDGS to synthesize PGD2, which in turn promotes mast cell maturation and degranulation via PTGDR. This is Prostaglandin D2 receptor (PTGDR) from Homo sapiens (Human).